Consider the following 469-residue polypeptide: MSAGRTFEGAGCVTWWGFGPARDLLNSDTHKVRLQEELNVLLVGSGDPRHILKTITGLTHSDTLHVWVIENSMEVIARQLLLLYISLLPPDKMSVHKKTEVFLEVFGNLEIRKETEESVKKAAAQLSISITYSLSSDSLSHSCLDTSLLKFKERDELVRIFKLWERPPSAPASVSKVWDARVRQHLGSRYDSRQGAFDWDLNMKLHQRGCGVINKHQYAKWRETGVTFEMREGLYQTANQSLLSTRVFNHRGNGVALRGYWGDIVSSPYLSFGIETENKELLKTQNNHYVKTAQDISEVNLLELFECLAARGRSPLNEDPPNTSSSCCQSTESRKTEENSQSDPSASQTQPVEHSPTQELDLLNVNGVKVSFLSPDSLSKLPLKSKYRNLFNTIFCSASMVHQLDSALREIAAPDAALVIELATFLLDLSKEQVSGFAVKVKEIAEESGFTPAHDQNSDKYAVFTQKNN.

Residues 313–356 are disordered; it reads RSPLNEDPPNTSSSCCQSTESRKTEENSQSDPSASQTQPVEHSP. 2 stretches are compositionally biased toward polar residues: residues 320-331 and 339-356; these read PPNTSSSCCQST and NSQSDPSASQTQPVEHSP.

The protein belongs to the DNAAF3 family. As to expression, mainly expressed in cell types that express axonemal dyneins.

The protein localises to the cytoplasm. Its subcellular location is the dynein axonemal particle. Functionally, required for the assembly of axonemal inner and outer dynein arms. Involved in preassembly of dyneins into complexes before their transport into cilia. This Danio rerio (Zebrafish) protein is Dynein axonemal assembly factor 3 (dnaaf3).